Reading from the N-terminus, the 326-residue chain is PDZ domain-containing protein MAGIX (326 aa).

The tract at residues 1–32 is disordered; that stretch reads MDSHAGNTADPRGSRRGVGLQGSGSPRARQLL. A PDZ domain is found at 128 to 212; the sequence is SVELVRGPAG…RLCLVLQRPQ (85 aa). The disordered stretch occupies residues 214 to 267; that stretch reads MNGSRSKEVGGGHQKTDRIPDPRGGRMMESRGTISPVHHRPKTRTGPGPSPESV. The segment covering 218–242 has biased composition (basic and acidic residues); the sequence is RSKEVGGGHQKTDRIPDPRGGRMME. Residue Ser263 is modified to Phosphoserine.

The polypeptide is PDZ domain-containing protein MAGIX (Magix) (Rattus norvegicus (Rat)).